The following is a 76-amino-acid chain: Conotoxin TxMEKL-011 (76 aa).

The N-terminal stretch at 1 to 19 is a signal peptide; the sequence is MEKLTILLLVAAVLMSTQA. The propeptide occupies 20 to 45; the sequence is LVERAGENRSKENIKFLLKRKRAADR. 3 disulfides stabilise this stretch: cysteine 51–cysteine 65, cysteine 58–cysteine 69, and cysteine 64–cysteine 73.

The protein belongs to the conotoxin O2 superfamily. Expressed by the venom duct.

Its subcellular location is the secreted. The polypeptide is Conotoxin TxMEKL-011 (Conus textile (Cloth-of-gold cone)).